We begin with the raw amino-acid sequence, 2070 residues long: Multiple PDZ domain protein (2070 aa).

An L27 domain is found at 1–63 (MLEAIDKNRA…SVQQLKDQVN (63 aa)). Residues 137 to 224 (VFELLKPPSG…TVQLVIARGS (88 aa)) enclose the PDZ 1 domain. Serine 230 carries the post-translational modification Phosphoserine. 2 PDZ domains span residues 257-337 (TIEL…ARGA) and 377-463 (DVEL…MRRG). Position 483 is a phosphoserine (serine 483). PDZ domains lie at 553-634 (VAHV…CRRT) and 700-786 (HIEL…VAKP). Serine 790 and serine 1078 each carry phosphoserine. One can recognise a PDZ 6 domain in the interval 1008 to 1089 (TINIAKGNSS…IGPDIKITYV (82 aa)). Residues 1121 to 1140 (DIPELPEREEGEGEESELQN) are disordered. In terms of domain architecture, PDZ 7 spans 1151 to 1243 (RVELWREPSK…PVVFMVQSII (93 aa)). Arginine 1170 bears the Omega-N-methylarginine mark. Positions 1278 to 1324 (ADKAPSQSESEPEKAPLCSVPPPPPSAFAEMGSDHTQSSASKISQDV) are disordered. Positions 1311–1321 (DHTQSSASKIS) are enriched in polar residues. PDZ domains lie at 1350 to 1433 (MIEL…IRNK) and 1483 to 1564 (HLEL…HAEN). The segment at 1567 to 1612 (SQAVPSAAGAASGEKKNSSQSLMVPQSGSPEPESIRNTSRSSTPAI) is disordered. Residues 1584 to 1610 (SSQSLMVPQSGSPEPESIRNTSRSSTP) show a composition bias toward polar residues. PDZ domains are found at residues 1629-1712 (TIEI…YRDE) and 1725-1807 (TIEL…GRIK). 2 positions are modified to phosphoserine: serine 1818 and serine 1824. 2 PDZ domains span residues 1862–1948 (TVEM…VAGG) and 1987–2070 (SITL…MVLS).

Interacts with CLDN5, DLG4, GRIN1, F11R/JAM, CLDN1, NG2, CRB1, MPP4 and PALS1. Interacts with HTR2A, HTR2B, HTR2C, PLEKHA1/TAPP1, PLEKHA2/TAPP2, CXADR, SYNGAP1, CAMK2A and CAMK2B. Interacts with FAT4 (via cytoplasmic domain). Interacts with DLL1. As to quaternary structure, (Microbial infection) Interacts with human adenovirus type 9 E4-ORF1 protein. In terms of assembly, (Microbial infection) Interacts with human papillomavirus 18/HPV18 protein E6. In terms of tissue distribution, expressed in heart, brain, placenta, liver, skeletal muscle, kidney and pancreas.

The protein localises to the cell membrane. Its subcellular location is the apical cell membrane. The protein resides in the postsynaptic density. It is found in the cell projection. It localises to the dendrite. The protein localises to the cell junction. Its subcellular location is the tight junction. The protein resides in the synapse. It is found in the synaptosome. Member of the NMDAR signaling complex that may play a role in control of AMPAR potentiation and synaptic plasticity in excitatory synapses. Promotes clustering of HT2RC at the cell surface. This Homo sapiens (Human) protein is Multiple PDZ domain protein (MPDZ).